Consider the following 341-residue polypeptide: MMTSVPPRKSWWTSKKTVKVIRSYPTFPSLNAWEKFRGLLPVDGETNPGVGLGVEEGLLCQMVHSPEFNLFPNSVVFESNFVQVRRSRNWKEIYKASNTMALGVTSSVPCLPLPNILLMARVKWHQGQSQTWNRPSRAPSINLKSILPLKFVELQIWDDQERVLRLRTVTEKIYYLKLHPDHPETVFHFWIRLVQILHKGLSITTKDPTILVTHCLVPKSLCSPGGKTELVQKKSKGLQPSESLTHLMAQGESETLSQIFSDLHQQKQYRSEKMHINKTSSEKATPCEDSIPCTCDLNWRDAFMFGEWERENPSGPQPLSLLGTLAASSRPRLSLTGGNSI.

The protein belongs to the GARIN family. Expressed in testis (at protein level).

The protein localises to the golgi apparatus. Its function is as follows. RAB2B effector protein required for accurate acrosome formation and normal male fertility. In complex with RAB2A/RAB2B, seems to suppress excessive vesicle trafficking during acrosome formation. This chain is Golgi-associated RAB2 interactor protein 1B, found in Mus musculus (Mouse).